The sequence spans 840 residues: Sorting nexin-25 (840 aa).

The 164-residue stretch at 1 to 164 (MDRVLRDVFD…MLLRQLEYRE (164 aa)) folds into the PXA domain. Residues 287–401 (QFEDIMTNPF…LVSDLYEKLM (115 aa)) form the RGS domain. The interval 404–437 (EEEEEPDAQLASEKDELGSGGEAGEEAVEGTSGV) is disordered. A coiled-coil region spans residues 446-494 (IKLRELNEKLEYKRQALSSIQNAPKPDKKIISKLKDEILLIEKECTALQ). Positions 508–628 (GLWRASITSA…AFLSPSPDYL (121 aa)) constitute a PX domain. At Ser-665 the chain carries Phosphoserine.

Belongs to the sorting nexin family.

The protein localises to the endosome membrane. In terms of biological role, may be involved in several stages of intracellular trafficking. In Mus musculus (Mouse), this protein is Sorting nexin-25 (Snx25).